A 184-amino-acid polypeptide reads, in one-letter code: uncharacterized protein (184 aa).

Belongs to the eIF-2B alpha/beta/delta subunits family.

This is an uncharacterized protein from Rhodospirillum rubrum.